The chain runs to 389 residues: Alanine racemase (389 aa).

Lys-48 serves as the catalytic Proton acceptor; specific for D-alanine. Lys-48 carries the post-translational modification N6-(pyridoxal phosphate)lysine. Residue Arg-144 coordinates substrate. The active-site Proton acceptor; specific for L-alanine is the Tyr-281. Met-329 contributes to the substrate binding site.

The protein belongs to the alanine racemase family. It depends on pyridoxal 5'-phosphate as a cofactor.

The enzyme catalyses L-alanine = D-alanine. It participates in amino-acid biosynthesis; D-alanine biosynthesis; D-alanine from L-alanine: step 1/1. Functionally, catalyzes the interconversion of L-alanine and D-alanine. May also act on other amino acids. The polypeptide is Alanine racemase (alr) (Leptospira interrogans serogroup Icterohaemorrhagiae serovar Lai (strain 56601)).